The primary structure comprises 299 residues: Oxygen-dependent coproporphyrinogen-III oxidase (299 aa).

A substrate-binding site is contributed by S92. A divalent metal cation contacts are provided by H96 and H106. H106 serves as the catalytic Proton donor. 108-110 (NVR) lines the substrate pocket. 2 residues coordinate a divalent metal cation: H145 and H175. Positions 240–275 (YVEFNLVWDRGTLFGLQTGGRTESILMSMPPLVRWE) are important for dimerization. Substrate is bound at residue 258–260 (GGR).

The protein belongs to the aerobic coproporphyrinogen-III oxidase family. Homodimer. It depends on a divalent metal cation as a cofactor.

The protein localises to the cytoplasm. It catalyses the reaction coproporphyrinogen III + O2 + 2 H(+) = protoporphyrinogen IX + 2 CO2 + 2 H2O. It participates in porphyrin-containing compound metabolism; protoporphyrin-IX biosynthesis; protoporphyrinogen-IX from coproporphyrinogen-III (O2 route): step 1/1. In terms of biological role, involved in the heme biosynthesis. Catalyzes the aerobic oxidative decarboxylation of propionate groups of rings A and B of coproporphyrinogen-III to yield the vinyl groups in protoporphyrinogen-IX. This Salmonella enteritidis PT4 (strain P125109) protein is Oxygen-dependent coproporphyrinogen-III oxidase.